A 37-amino-acid chain; its full sequence is Photosystem I reaction center subunit VIII (37 aa).

A helical transmembrane segment spans residues 7–27 (LPSFFVPLVGLVFPAIAMASL).

It belongs to the PsaI family.

Its subcellular location is the plastid. The protein resides in the chloroplast thylakoid membrane. May help in the organization of the PsaL subunit. This is Photosystem I reaction center subunit VIII from Eucalyptus globulus subsp. globulus (Tasmanian blue gum).